Consider the following 60-residue polypeptide: Conotoxin Cal6.20 (60 aa).

Positions 1 to 22 (MKLTCVLIVAVLILTACQVIAA) are cleaved as a signal peptide. Intrachain disulfides connect Cys32-Cys42, Cys35-Cys48, and Cys41-Cys55.

This sequence belongs to the conotoxin O1 superfamily. Expressed by the venom duct.

It localises to the secreted. In terms of biological role, probable neurotoxin. This Californiconus californicus (California cone) protein is Conotoxin Cal6.20.